The following is a 220-amino-acid chain: Ribonuclease HII (220 aa).

The RNase H type-2 domain occupies 32-220; that stretch reads KHIAGIDEAG…FAPIKGRFDC (189 aa). Positions 38, 39, and 130 each coordinate a divalent metal cation.

This sequence belongs to the RNase HII family. The cofactor is Mn(2+). Mg(2+) is required as a cofactor.

The protein localises to the cytoplasm. The enzyme catalyses Endonucleolytic cleavage to 5'-phosphomonoester.. Functionally, endonuclease that specifically degrades the RNA of RNA-DNA hybrids. This chain is Ribonuclease HII, found in Brucella suis (strain ATCC 23445 / NCTC 10510).